Reading from the N-terminus, the 291-residue chain is ATP synthase gamma chain (291 aa).

Belongs to the ATPase gamma chain family. In terms of assembly, F-type ATPases have 2 components, CF(1) - the catalytic core - and CF(0) - the membrane proton channel. CF(1) has five subunits: alpha(3), beta(3), gamma(1), delta(1), epsilon(1). CF(0) has three main subunits: a, b and c.

It localises to the cell inner membrane. In terms of biological role, produces ATP from ADP in the presence of a proton gradient across the membrane. The gamma chain is believed to be important in regulating ATPase activity and the flow of protons through the CF(0) complex. This Persephonella marina (strain DSM 14350 / EX-H1) protein is ATP synthase gamma chain.